We begin with the raw amino-acid sequence, 317 residues long: Olfactory receptor 5K17 (317 aa).

At 1 to 28 (MMKANHSLTVEFILIGFSDHTDLKTLLF) the chain is on the extracellular side. A glycan (N-linked (GlcNAc...) asparagine) is linked at Asn-5. A helical membrane pass occupies residues 29–49 (LLFSAIYLVTIVGNLGLVALI). At 50–56 (YMEPRLH) the chain is on the cytoplasmic side. The chain crosses the membrane as a helical span at residues 57-77 (TPMYIFLGNLALMDSCCSCAI). At 78-93 (TPKMLENFFSVDRRIS) the chain is on the extracellular side. The chain crosses the membrane as a helical span at residues 94–114 (LYECMVQFYFLCLAETADCFL). Cysteines 97 and 189 form a disulfide. Residues 115 to 144 (LAAMAYDRYVAICNPLQYHTMMSKKLSIQM) are Cytoplasmic-facing. A helical transmembrane segment spans residues 145–165 (SIGTFIASNLHSLIHTGCLLR). Residues 166-198 (LNFCKSRRIDHFFCDILPLYKLSCTDPFINELM) lie on the Extracellular side of the membrane. The chain crosses the membrane as a helical span at residues 199-219 (LYIFSMPIQVFTITTVLVSYS). Residues 220–239 (CILLTVFKMKSKDGRGKAFS) lie on the Cytoplasmic side of the membrane. The chain crosses the membrane as a helical span at residues 240 to 259 (TCASHFFSVSIFYICLLMYI). Over 260–268 (GPSKNSNKD) the chain is Extracellular. A helical membrane pass occupies residues 269 to 289 (IPVGVFYTIVIPLLNPFIYSL). At 290-317 (RNKEVVNAVKKVMKTHSIFKNSSASIAH) the chain is on the cytoplasmic side.

Belongs to the G-protein coupled receptor 1 family.

Its subcellular location is the cell membrane. Its function is as follows. Potential odorant receptor. This Mus musculus (Mouse) protein is Olfactory receptor 5K17.